We begin with the raw amino-acid sequence, 529 residues long: Peptide chain release factor 3 (529 aa).

In terms of domain architecture, tr-type G spans 11–280 (AKRRTFAIIS…GLVEWAPAPM (270 aa)). Residues 20-27 (SHPDAGKT), 88-92 (DTPGH), and 142-145 (NKLD) each bind GTP.

The protein belongs to the TRAFAC class translation factor GTPase superfamily. Classic translation factor GTPase family. PrfC subfamily.

It localises to the cytoplasm. Functionally, increases the formation of ribosomal termination complexes and stimulates activities of RF-1 and RF-2. It binds guanine nucleotides and has strong preference for UGA stop codons. It may interact directly with the ribosome. The stimulation of RF-1 and RF-2 is significantly reduced by GTP and GDP, but not by GMP. The sequence is that of Peptide chain release factor 3 from Citrobacter koseri (strain ATCC BAA-895 / CDC 4225-83 / SGSC4696).